The following is a 286-amino-acid chain: P2R1A-PPP2R2A-interacting phosphatase regulator 1 (286 aa).

Positions 1–46 (MAQEKMELDLELPAGTGASPAEGGGPGSGGLRRSNSAPLIHGLSDS) are disordered. Serine 34 is subject to Phosphoserine. At serine 36 the chain carries Phosphoserine; by CHEK1. Residues serine 44, serine 47, serine 61, and serine 75 each carry the phosphoserine modification. Lysine 88 participates in a covalent cross-link: Glycyl lysine isopeptide (Lys-Gly) (interchain with G-Cter in SUMO1). A phosphoserine mark is found at serine 142 and serine 146. Threonine 148 bears the Phosphothreonine mark. The interval 166 to 187 (SNGLPPSPIPSPTTRFTTRRSQ) is disordered. The span at 177–187 (PTTRFTTRRSQ) shows a compositional bias: low complexity. 2 positions are modified to phosphoserine: serine 186 and serine 188. The disordered stretch occupies residues 238 to 286 (VSSDTLDGNSSSAGSSCNSPAKVSTTTDSPVSPAQAASPFIPVDELSSK). The segment covering 245–256 (GNSSSAGSSCNS) has biased composition (low complexity). The span at 258 to 269 (AKVSTTTDSPVS) shows a compositional bias: polar residues. Residues serine 266, serine 269, and serine 275 each carry the phosphoserine modification.

This sequence belongs to the FAM122 family. In terms of assembly, interacts with PPP2CA and PPP2R1A. Interacts (via its N-terminus) with PPP2R2A; the interaction is direct and this interaction inhibits PP2A activity. The CHEK1-mediated Ser-36 phosphorylated form interacts with 14-3-3 proteins. Post-translationally, CHEK1-mediated phosphorylation at Ser-36 negatively regulates its ability to inhibit serine/threonine-protein phosphatase 2A (PP2A) activity. Phosphorylation leads to its release from the PP2A complex and its sequestration by 14-3-3 proteins in the cytoplasm resulting in its inability to translocate to the nucleus, where it otherwise inhibits PP2A.

It localises to the nucleus. The protein localises to the cytoplasm. In terms of biological role, acts as an inhibitor of serine/threonine-protein phosphatase 2A (PP2A) activity. Inhibits PP2A activity by blocking the substrate binding site on PPP2R2A and the active site of PPP2CA. Potentiates ubiquitin-mediated proteasomal degradation of serine/threonine-protein phosphatase 2A catalytic subunit alpha (PPP2CA). Inhibits PP2A-mediated dephosphorylation of WEE1, promoting ubiquitin-mediated proteolysis of WEE1, thereby releasing G2/M checkpoint. The protein is P2R1A-PPP2R2A-interacting phosphatase regulator 1 of Rattus norvegicus (Rat).